The sequence spans 395 residues: MILTSESVTEGHPDKLCDQISDAILDGVICKDKNARAGIETIAGNGVVHVFGEVSNPDSVDIPGIIRKTILDIGYTSEDAGIDGNTCSIQESITSQSKEIADAVNFSLEYRNQQGDLGRNSFSQQGSGDQGSVFGYACRETPEMMPLPITIAHKLAYSLAFVRKEKILPYLLPDGKSQVTLGYDSANRPKTLETVVISAQHEDSVDLDKLRFDILERVVRPVISATGLDCSKATFLINPAGRFVTGGPSADSGLTGRKIVVDTYGCAAKHGGGALSGKDPSKLDRFASYMARWVAKHVVAADFAESIEVQISYAIGKAHPVAFNIDTHGTNTIALDKLKRAILKVFDFRPAAVIDSLDLKRPIYQKTAAYGHFGRDIFTWERICPDKLNALLGAV.

His-12 provides a ligand contact to ATP. Asp-14 lines the Mg(2+) pocket. Glu-40 is a K(+) binding site. L-methionine is bound by residues Glu-53 and Gln-96. The tract at residues 96 to 106 is flexible loop; sequence QSKEIADAVNF. ATP-binding positions include 174 to 176, 242 to 243, Asp-251, 257 to 258, Ala-274, and Lys-278; these read DGK, RF, and RK. Asp-251 serves as a coordination point for L-methionine. Lys-282 is a binding site for L-methionine.

The protein belongs to the AdoMet synthase family. Homotetramer; dimer of dimers. Mg(2+) is required as a cofactor. The cofactor is K(+).

Its subcellular location is the cytoplasm. The enzyme catalyses L-methionine + ATP + H2O = S-adenosyl-L-methionine + phosphate + diphosphate. It participates in amino-acid biosynthesis; S-adenosyl-L-methionine biosynthesis; S-adenosyl-L-methionine from L-methionine: step 1/1. Its function is as follows. Catalyzes the formation of S-adenosylmethionine (AdoMet) from methionine and ATP. The overall synthetic reaction is composed of two sequential steps, AdoMet formation and the subsequent tripolyphosphate hydrolysis which occurs prior to release of AdoMet from the enzyme. The sequence is that of S-adenosylmethionine synthase from Tropheryma whipplei (strain Twist) (Whipple's bacillus).